The chain runs to 303 residues: N-acetyl-D-glucosamine kinase (303 aa).

Residues 4–11 (GFDIGGTK) and 133–140 (GVGGGLVL) each bind ATP. Positions 157, 177, 179, and 184 each coordinate Zn(2+).

It belongs to the ROK (NagC/XylR) family. NagK subfamily.

The enzyme catalyses N-acetyl-D-glucosamine + ATP = N-acetyl-D-glucosamine 6-phosphate + ADP + H(+). It participates in cell wall biogenesis; peptidoglycan recycling. Functionally, catalyzes the phosphorylation of N-acetyl-D-glucosamine (GlcNAc) derived from cell-wall degradation, yielding GlcNAc-6-P. This is N-acetyl-D-glucosamine kinase from Salmonella newport (strain SL254).